The sequence spans 288 residues: Protoheme IX farnesyltransferase (288 aa).

9 helical membrane-spanning segments follow: residues Val6–Leu26, Phe44–Ile64, Leu89–Ile109, Val111–Phe131, Ile138–Val158, Leu169–Phe189, Ile213–Ile233, Leu238–Ile258, and Ile268–Val288.

This sequence belongs to the UbiA prenyltransferase family. Protoheme IX farnesyltransferase subfamily.

The protein localises to the cell membrane. The enzyme catalyses heme b + (2E,6E)-farnesyl diphosphate + H2O = Fe(II)-heme o + diphosphate. It participates in porphyrin-containing compound metabolism; heme O biosynthesis; heme O from protoheme: step 1/1. In terms of biological role, converts heme B (protoheme IX) to heme O by substitution of the vinyl group on carbon 2 of heme B porphyrin ring with a hydroxyethyl farnesyl side group. The sequence is that of Protoheme IX farnesyltransferase from Buchnera aphidicola subsp. Baizongia pistaciae (strain Bp).